A 339-amino-acid polypeptide reads, in one-letter code: Large ribosomal subunit protein uL10 (339 aa).

The interval 307-339 is disordered; sequence VEEEKKEEKVEEEKEDEEASEEEALAGLSALFG. The segment covering 308 to 318 has biased composition (basic and acidic residues); it reads EEEKKEEKVEE. Over residues 319–330 the composition is skewed to acidic residues; sequence EKEDEEASEEEA.

The protein belongs to the universal ribosomal protein uL10 family. Part of the 50S ribosomal subunit. Forms part of the ribosomal stalk which helps the ribosome interact with GTP-bound translation factors. Forms a heptameric L10(L12)2(L12)2(L12)2 complex, where L10 forms an elongated spine to which the L12 dimers bind in a sequential fashion.

In terms of biological role, forms part of the ribosomal stalk, playing a central role in the interaction of the ribosome with GTP-bound translation factors. This Pyrococcus furiosus (strain ATCC 43587 / DSM 3638 / JCM 8422 / Vc1) protein is Large ribosomal subunit protein uL10.